The following is a 311-amino-acid chain: Transmembrane protein DDB_G0273707/DDB_G0273361 (311 aa).

A disordered region spans residues 1 to 113 (MNEIEVDNLS…NNNNNKNENN (113 aa)). Asparagine 8 carries an N-linked (GlcNAc...) asparagine glycan. Over residues 9–18 (LSHTNKNVAT) the composition is skewed to polar residues. 4 N-linked (GlcNAc...) asparagine glycosylation sites follow: asparagine 35, asparagine 38, asparagine 62, and asparagine 76. Low complexity-rich tracts occupy residues 37 to 67 (SNNS…SNSN) and 76 to 111 (NNSN…NKNE). A coiled-coil region spans residues 95–124 (NNNNNNNNNNNNNNKNENNNKIKNEKINIL). 5 helical membrane passes run 150 to 170 (LEEI…LALL), 181 to 201 (IFLL…PKSP), 208 to 228 (LVLG…ALVY), 235 to 255 (VACA…KSIH), and 276 to 296 (FYYI…TALI).

The protein resides in the membrane. This is Transmembrane protein DDB_G0273707/DDB_G0273361 from Dictyostelium discoideum (Social amoeba).